We begin with the raw amino-acid sequence, 159 residues long: MRPTPMTAILALSLAAAAPAMAASLKDIAPYPEAEKGFTRQVIHLPAQADESAYKLEILAGKTLQVDCNRQRLGGNLEARTLEGWGYNYYRLDNVSGPASTLMACPDGKKTEAFVPVVGDGFLLRYNSKLPVVVYVPKDVEVRYRVWSASQDVQKAKVE.

An N-terminal signal peptide occupies residues 1 to 22; it reads MRPTPMTAILALSLAAAAPAMA. A disulfide bridge links Cys-68 with Cys-105.

Belongs to the protease inhibitor I11 (ecotin) family. As to quaternary structure, homodimer.

It is found in the periplasm. In terms of biological role, general inhibitor of family S1 serine proteases. This Pseudomonas putida (strain ATCC 700007 / DSM 6899 / JCM 31910 / BCRC 17059 / LMG 24140 / F1) protein is Ecotin.